The sequence spans 156 residues: Eosinophil cationic-type ribonuclease 3 (156 aa).

Residues 1-25 (MGPKLLESRLCLLLLLRLVLMLASC) form the signal peptide. H38 acts as the Proton acceptor in catalysis. N41 carries N-linked (GlcNAc...) asparagine glycosylation. 4 cysteine pairs are disulfide-bonded: C47/C106, C61/C119, C79/C134, and C86/C94. 62–66 (KGLNT) lines the substrate pocket. N-linked (GlcNAc...) asparagine glycans are attached at residues N89, N96, and N107. H151 (proton donor) is an active-site residue.

It belongs to the pancreatic ribonuclease family.

In Mus musculus (Mouse), this protein is Eosinophil cationic-type ribonuclease 3 (Ear3).